Consider the following 143-residue polypeptide: Mediator of RNA polymerase II transcription subunit 22 (143 aa).

This sequence belongs to the Mediator complex subunit 22 family. Component of the Mediator complex, which includes at least CDK8, MED4, MED6, MED11, MED14, MED17, MED18, MED20, MED21, MED22, MED27, MED28, MED30 and MED31.

The protein localises to the nucleus. In terms of biological role, component of the Mediator complex, a coactivator involved in the regulated transcription of nearly all RNA polymerase II-dependent genes. Mediator functions as a bridge to convey information from gene-specific regulatory proteins to the basal RNA polymerase II transcription machinery. Mediator is recruited to promoters by direct interactions with regulatory proteins and serves as a scaffold for the assembly of a functional preinitiation complex with RNA polymerase II and the general transcription factors. This Drosophila melanogaster (Fruit fly) protein is Mediator of RNA polymerase II transcription subunit 22 (MED22).